A 439-amino-acid chain; its full sequence is Leukocyte immunoglobulin-like receptor subfamily A member 3 (439 aa).

The N-terminal stretch at 1-23 is a signal peptide; that stretch reads MTPILTVLICLGLSLDPRTHVQA. 4 consecutive Ig-like C2-type domains span residues 27–108, 119–224, 226–315, and 326–415; these read PKPT…AGLS, TGAY…GVSK, PSLS…DPLD, and PFLS…SDPL. Cys49 and Cys98 are disulfide-bonded. A glycan (N-linked (GlcNAc...) asparagine) is linked at Asn140. Intrachain disulfides connect Cys145-Cys197, Cys157-Cys167, and Cys246-Cys297. Residues Asn281, Asn302, and Asn341 are each glycosylated (N-linked (GlcNAc...) asparagine). A disulfide bond links Cys346 and Cys397. Residue Asn431 is glycosylated (N-linked (GlcNAc...) asparagine).

Post-translationally, N-glycosylation is required for ligand binding. Detected in B-cells, and at lower levels in natural killer (NK) cells. Detected in peripheral blood monocytes and lung.

Its subcellular location is the secreted. In terms of biological role, acts as a soluble receptor for class I MHC antigens. Binds both classical and non-classical HLA class I molecules but with reduced affinities compared to LILRB1 or LILRB2. Binds with high affinity to the surface of monocytes, leading to abolish LPS-induced TNF-alpha production by monocytes. This Homo sapiens (Human) protein is Leukocyte immunoglobulin-like receptor subfamily A member 3 (LILRA3).